We begin with the raw amino-acid sequence, 159 residues long: NADH-quinone oxidoreductase subunit B (159 aa).

Positions 37, 38, 102, and 132 each coordinate [4Fe-4S] cluster.

The protein belongs to the complex I 20 kDa subunit family. NDH-1 is composed of 14 different subunits. Subunits NuoB, C, D, E, F, and G constitute the peripheral sector of the complex. [4Fe-4S] cluster serves as cofactor.

It localises to the cell inner membrane. It carries out the reaction a quinone + NADH + 5 H(+)(in) = a quinol + NAD(+) + 4 H(+)(out). In terms of biological role, NDH-1 shuttles electrons from NADH, via FMN and iron-sulfur (Fe-S) centers, to quinones in the respiratory chain. The immediate electron acceptor for the enzyme in this species is believed to be ubiquinone. Couples the redox reaction to proton translocation (for every two electrons transferred, four hydrogen ions are translocated across the cytoplasmic membrane), and thus conserves the redox energy in a proton gradient. The protein is NADH-quinone oxidoreductase subunit B of Variovorax paradoxus (strain S110).